The sequence spans 393 residues: Lipoyl synthase, mitochondrial (393 aa).

Positions 111, 116, 122, 142, 146, 149, and 357 each coordinate [4Fe-4S] cluster. The Radical SAM core domain occupies glutamate 127–leucine 346.

This sequence belongs to the radical SAM superfamily. Lipoyl synthase family. [4Fe-4S] cluster serves as cofactor.

The protein localises to the mitochondrion. It carries out the reaction [[Fe-S] cluster scaffold protein carrying a second [4Fe-4S](2+) cluster] + N(6)-octanoyl-L-lysyl-[protein] + 2 oxidized [2Fe-2S]-[ferredoxin] + 2 S-adenosyl-L-methionine + 4 H(+) = [[Fe-S] cluster scaffold protein] + N(6)-[(R)-dihydrolipoyl]-L-lysyl-[protein] + 4 Fe(3+) + 2 hydrogen sulfide + 2 5'-deoxyadenosine + 2 L-methionine + 2 reduced [2Fe-2S]-[ferredoxin]. It participates in protein modification; protein lipoylation via endogenous pathway; protein N(6)-(lipoyl)lysine from octanoyl-[acyl-carrier-protein]: step 2/2. Its function is as follows. Catalyzes the radical-mediated insertion of two sulfur atoms into the C-6 and C-8 positions of the octanoyl moiety bound to the lipoyl domains of lipoate-dependent enzymes, thereby converting the octanoylated domains into lipoylated derivatives. This is Lipoyl synthase, mitochondrial from Aedes aegypti (Yellowfever mosquito).